A 121-amino-acid polypeptide reads, in one-letter code: Small ribosomal subunit protein uS10 (121 aa).

An N-acetylserine modification is found at S2. Glycyl lysine isopeptide (Lys-Gly) (interchain with G-Cter in ubiquitin) cross-links involve residues K6, K8, K21, K32, and K101.

The protein belongs to the universal ribosomal protein uS10 family. As to quaternary structure, component of the small ribosomal subunit (SSU). Mature yeast ribosomes consist of a small (40S) and a large (60S) subunit. The 40S small subunit contains 1 molecule of ribosomal RNA (18S rRNA) and 33 different proteins (encoded by 57 genes). The large 60S subunit contains 3 rRNA molecules (25S, 5.8S and 5S rRNA) and 46 different proteins (encoded by 81 genes). In terms of processing, ubiquitinated at Lys-6 and Lys-8 by HEL2, to activate the ribosome quality control (RQC) pathway in response to stalled ribosomes. Post-translationally, N-terminally acetylated by acetyltransferase NatA. Also partially acetylated by NatC.

The protein localises to the cytoplasm. In terms of biological role, component of the ribosome, a large ribonucleoprotein complex responsible for the synthesis of proteins in the cell. The small ribosomal subunit (SSU) binds messenger RNAs (mRNAs) and translates the encoded message by selecting cognate aminoacyl-transfer RNA (tRNA) molecules. The large subunit (LSU) contains the ribosomal catalytic site termed the peptidyl transferase center (PTC), which catalyzes the formation of peptide bonds, thereby polymerizing the amino acids delivered by tRNAs into a polypeptide chain. The nascent polypeptides leave the ribosome through a tunnel in the LSU and interact with protein factors that function in enzymatic processing, targeting, and the membrane insertion of nascent chains at the exit of the ribosomal tunnel. This Saccharomyces cerevisiae (strain ATCC 204508 / S288c) (Baker's yeast) protein is Small ribosomal subunit protein uS10.